Here is a 572-residue protein sequence, read N- to C-terminus: Terminal nucleotidyltransferase 4B (572 aa).

The tract at residues 1–105 (MYRSGERLLG…ADGGGVVYSG (105 aa)) is disordered. Polar residues predominate over residues 25 to 34 (ETTNNNNNHH). The segment covering 36–76 (PGAWARRAGSSASSPPSASSSPHPSAAVPAADPADSASGSS) has biased composition (low complexity). The segment covering 89–102 (RAAGGGRADGGGVV) has biased composition (gly residues). Val151 is covalently cross-linked (Glycyl lysine isopeptide (Lys-Gly) (interchain with G-Cter in SUMO2)). Mg(2+) is bound by residues Asp177 and Asp179. Gly240, Lys265, Ser283, Tyr284, Asn368, and Arg372 together coordinate ATP. The 61-residue stretch at 308-368 (NYGVLLIEFF…YIEDPLQPGN (61 aa)) folds into the PAP-associated domain. The interval 435-572 (KNRPEPSCNG…RDAPLSDLCR (138 aa)) is disordered. Residues 446–464 (VSSSSATQSSSSDVDSDAT) are compositionally biased toward low complexity. A Glycyl lysine isopeptide (Lys-Gly) (interchain with G-Cter in SUMO2) cross-link involves residue Lys470. A compositionally biased stretch (polar residues) spans 477 to 494 (STGNRVGSQDVSLESSQA). A Phosphoserine modification is found at Ser484. Residues Lys497, Lys512, and Lys526 each participate in a glycyl lysine isopeptide (Lys-Gly) (interchain with G-Cter in SUMO2) cross-link. The span at 499-514 (QSTQTTNTSNSTNKSQ) shows a compositional bias: low complexity. The span at 522–553 (RSSSKGFQGTTQTSHGSLMTNKQHQGKSNNQY) shows a compositional bias: polar residues. Residues 557 to 563 (KKRKHKR) carry the Basic, involved in binding of the RNA primer motif.

The protein belongs to the DNA polymerase type-B-like family. As to quaternary structure, component of a nucleolar TRAMP-like complex, an ATP-dependent exosome regulatory complex consisting of a helicase (MTREX), an oligadenylate polymerase (TENT4B or TENT4A), and a substrate specific RNA-binding factor (ZCCHC7 or ZCCHC8). Several TRAMP-like complexes exist with specific compositions and are associated with nuclear, or nucleolar RNA exosomes. Interacts with CPEB1; the interaction is required for TENT4B-mediated translational control. The cofactor is Mg(2+). Mn(2+) is required as a cofactor.

The protein localises to the nucleus. It is found in the nucleolus. Its subcellular location is the cytoplasm. It carries out the reaction RNA(n) + ATP = RNA(n)-3'-adenine ribonucleotide + diphosphate. Its function is as follows. Terminal nucleotidyltransferase that catalyzes preferentially the transfer of ATP and GTP on RNA 3' poly(A) tail creating a heterogeneous 3' poly(A) tail leading to mRNAs stabilization by protecting mRNAs from active deadenylation. Also functions as a catalytic subunit of a TRAMP-like complex which has a poly(A) RNA polymerase activity and is involved in a post-transcriptional quality control mechanism. Polyadenylation with short oligo(A) tails is required for the degradative activity of the exosome on several of its nuclear RNA substrates. Doesn't need a cofactor for polyadenylation activity (in vitro). Required for cytoplasmic polyadenylation of mRNAs involved in carbohydrate metabolism, including the glucose transporter SLC2A1/GLUT1. Plays a role in replication-dependent histone mRNA degradation, probably through terminal uridylation of mature histone mRNAs. May play a role in sister chromatid cohesion. Mediates 3' adenylation of the microRNA MIR21 followed by its 3'-to-5' trimming by the exoribonuclease PARN leading to degradation. Mediates 3' adenylation of H/ACA box snoRNAs (small nucleolar RNAs) followed by its 3'-to-5' trimming by the exoribonuclease PARN which enhances snoRNA stability and maturation. This Homo sapiens (Human) protein is Terminal nucleotidyltransferase 4B.